Reading from the N-terminus, the 306-residue chain is Porphobilinogen deaminase (306 aa).

An S-(dipyrrolylmethanemethyl)cysteine modification is found at cysteine 244.

Belongs to the HMBS family. As to quaternary structure, monomer. It depends on dipyrromethane as a cofactor.

The catalysed reaction is 4 porphobilinogen + H2O = hydroxymethylbilane + 4 NH4(+). It functions in the pathway porphyrin-containing compound metabolism; protoporphyrin-IX biosynthesis; coproporphyrinogen-III from 5-aminolevulinate: step 2/4. Functionally, tetrapolymerization of the monopyrrole PBG into the hydroxymethylbilane pre-uroporphyrinogen in several discrete steps. In Streptococcus sanguinis (strain SK36), this protein is Porphobilinogen deaminase.